Reading from the N-terminus, the 98-residue chain is MYAVIKTGGKQYKVEKGMKLKVEKLPYEVGQTVEFEALMLRKDDGSIEFNKGKVIAEVKAHGRGKKLIVFKYRPKKNYKRWKGHRQPYTEIEIKDILP.

Belongs to the bacterial ribosomal protein bL21 family. As to quaternary structure, part of the 50S ribosomal subunit. Contacts protein L20.

Its function is as follows. This protein binds to 23S rRNA in the presence of protein L20. The chain is Large ribosomal subunit protein bL21 from Aquifex aeolicus (strain VF5).